Here is a 119-residue protein sequence, read N- to C-terminus: MVKLAFPRELRLLTPTHFTFVFQQPQRAGTPQITILGRLNQLGHPRIGLTVAKKHVKRAHERNRIKRLTRESFRLRQHELPAMDFVVVAKKGIADLDNRALTEALEKLWRRHCRQAPAS.

Belongs to the RnpA family. Consists of a catalytic RNA component (M1 or rnpB) and a protein subunit.

It carries out the reaction Endonucleolytic cleavage of RNA, removing 5'-extranucleotides from tRNA precursor.. Functionally, RNaseP catalyzes the removal of the 5'-leader sequence from pre-tRNA to produce the mature 5'-terminus. It can also cleave other RNA substrates such as 4.5S RNA. The protein component plays an auxiliary but essential role in vivo by binding to the 5'-leader sequence and broadening the substrate specificity of the ribozyme. The polypeptide is Ribonuclease P protein component (Serratia proteamaculans (strain 568)).